Consider the following 374-residue polypeptide: DNA replication and repair protein RecF (374 aa).

An ATP-binding site is contributed by 30 to 37 (GPNAQGKS).

It belongs to the RecF family.

The protein localises to the cytoplasm. In terms of biological role, the RecF protein is involved in DNA metabolism; it is required for DNA replication and normal SOS inducibility. RecF binds preferentially to single-stranded, linear DNA. It also seems to bind ATP. This chain is DNA replication and repair protein RecF, found in Acaryochloris marina (strain MBIC 11017).